Consider the following 185-residue polypeptide: Putative manganese efflux pump MntP (185 aa).

Transmembrane regions (helical) follow at residues Leu-4–Phe-24, Ile-40–Ala-60, Leu-64–Leu-84, Leu-108–Met-128, Phe-134–Ala-154, and Tyr-165–Val-185.

It belongs to the MntP (TC 9.B.29) family.

Its subcellular location is the cell membrane. In terms of biological role, probably functions as a manganese efflux pump. The sequence is that of Putative manganese efflux pump MntP from Bacillus velezensis (strain DSM 23117 / BGSC 10A6 / LMG 26770 / FZB42) (Bacillus amyloliquefaciens subsp. plantarum).